Here is a 288-residue protein sequence, read N- to C-terminus: Heme oxygenase 1 (288 aa).

Topologically, residues 1–265 (MERPQPDSMP…KTPLNTHSQA (265 aa)) are cytoplasmic. 4 residues coordinate heme b: Lys-18, His-25, Tyr-134, and Arg-183. Residues 223–260 (HDTKDQSPSRAPGLRQRASNKAQDSAPVETPRGKTPLN) are disordered. Phosphoserine is present on Ser-229. A helical; Anchor for type IV membrane protein membrane pass occupies residues 266–288 (PLLRWVLTLSFLVATVAVGLYAM).

The protein belongs to the heme oxygenase family. In terms of assembly, homodimer and higher order homooligomer. Oligomerization is crucial for its stability and function in the endoplasmic reticulum. Interacts with FLVCR2; this interaction is potentiated in the presence of heme. A soluble form arises by proteolytic removal of the membrane anchor.

The protein resides in the endoplasmic reticulum membrane. The catalysed reaction is heme b + 3 reduced [NADPH--hemoprotein reductase] + 3 O2 = biliverdin IXalpha + CO + Fe(2+) + 3 oxidized [NADPH--hemoprotein reductase] + 3 H2O + H(+). In terms of biological role, catalyzes the oxidative cleavage of heme at the alpha-methene bridge carbon, released as carbon monoxide (CO), to generate biliverdin IXalpha, while releasing the central heme iron chelate as ferrous iron. Affords protection against programmed cell death and this cytoprotective effect relies on its ability to catabolize free heme and prevent it from sensitizing cells to undergo apoptosis. Its function is as follows. Catalyzes the oxidative cleavage of heme at the alpha-methene bridge carbon, released as carbon monoxide (CO), to generate biliverdin IXalpha, while releasing the central heme iron chelate as ferrous iron. In Pongo abelii (Sumatran orangutan), this protein is Heme oxygenase 1 (HMOX1).